The primary structure comprises 1361 residues: Xanthine dehydrogenase 1 (1361 aa).

Positions 15-101 constitute a 2Fe-2S ferredoxin-type domain; the sequence is TEALLYVNGV…GMHVISIEGL (87 aa). [2Fe-2S] cluster contacts are provided by C53, C58, C61, C83, C123, C126, C159, and C161. Positions 257-442 constitute an FAD-binding PCMH-type domain; that stretch reads RGNGGITWYR…LSVFLPWTRP (186 aa). Residues 285–292, F365, 375–379, D388, L432, and K450 contribute to the FAD site; these read LLVGNTEV and CIGGN. The Mo-molybdopterin site is built by Q796 and F827. Substrate-binding residues include E831 and R909. Mo-molybdopterin is bound at residue R941. The substrate site is built by F943 and T1039. Residue A1108 participates in Mo-molybdopterin binding. The active-site Proton acceptor is E1297.

It belongs to the xanthine dehydrogenase family. In terms of assembly, homodimer. [2Fe-2S] cluster serves as cofactor. Requires FAD as cofactor. The cofactor is Mo-molybdopterin. In terms of tissue distribution, expressed in roots, leaves, stems, flowers and siliques.

The catalysed reaction is xanthine + NAD(+) + H2O = urate + NADH + H(+). It carries out the reaction hypoxanthine + NAD(+) + H2O = xanthine + NADH + H(+). Functionally, key enzyme involved in purine catabolism. Catalyzes the oxidation of hypoxanthine to xanthine and the oxidation of xanthine to urate. Regulates the level of ureides and plays an important role during plant growth and development, senescence and response to stresses. Possesses NADH oxidase activity and may contribute to the generation of superoxide anions in planta. This Arabidopsis thaliana (Mouse-ear cress) protein is Xanthine dehydrogenase 1 (XDH1).